We begin with the raw amino-acid sequence, 319 residues long: NADH-cytochrome b5 reductase 2 (319 aa).

The helical transmembrane segment at 30-46 (LAPVYLTVGLAGLGVGL) threads the bilayer. The region spanning 69–173 (QGWVDLKLSE…KGPLPKYPWE (105 aa)) is the FAD-binding FR-type domain. Residue 176–211 (KHQHICLIAGGTGITPMYQLARHIFKNPEDKTKVTL) coordinates FAD.

This sequence belongs to the flavoprotein pyridine nucleotide cytochrome reductase family. The cofactor is FAD.

It is found in the mitochondrion outer membrane. It carries out the reaction 2 Fe(III)-[cytochrome b5] + NADH = 2 Fe(II)-[cytochrome b5] + NAD(+) + H(+). May mediate the reduction of outer membrane cytochrome b5. The protein is NADH-cytochrome b5 reductase 2 (mcr1) of Aspergillus terreus (strain NIH 2624 / FGSC A1156).